The following is a 248-amino-acid chain: Deoxyribose-phosphate aldolase (248 aa).

Asp-117 functions as the Proton donor/acceptor in the catalytic mechanism. The active-site Schiff-base intermediate with acetaldehyde is the Lys-179. Catalysis depends on Lys-208, which acts as the Proton donor/acceptor.

Belongs to the DeoC/FbaB aldolase family. DeoC type 1 subfamily.

The protein resides in the cytoplasm. The enzyme catalyses 2-deoxy-D-ribose 5-phosphate = D-glyceraldehyde 3-phosphate + acetaldehyde. Its pathway is carbohydrate degradation; 2-deoxy-D-ribose 1-phosphate degradation; D-glyceraldehyde 3-phosphate and acetaldehyde from 2-deoxy-alpha-D-ribose 1-phosphate: step 2/2. Functionally, catalyzes a reversible aldol reaction between acetaldehyde and D-glyceraldehyde 3-phosphate to generate 2-deoxy-D-ribose 5-phosphate. The chain is Deoxyribose-phosphate aldolase from Thermotoga sp. (strain RQ2).